The chain runs to 553 residues: Dihydroxy-acid dehydratase (553 aa).

A Mg(2+)-binding site is contributed by Asp-78. Residue Cys-119 coordinates [2Fe-2S] cluster. Mg(2+) is bound by residues Asp-120 and Lys-121. Residue Lys-121 is modified to N6-carboxylysine. Residue Cys-191 coordinates [2Fe-2S] cluster. Glu-444 is a binding site for Mg(2+). Catalysis depends on Ser-470, which acts as the Proton acceptor.

Belongs to the IlvD/Edd family. As to quaternary structure, homodimer. [2Fe-2S] cluster is required as a cofactor. Requires Mg(2+) as cofactor.

It carries out the reaction (2R)-2,3-dihydroxy-3-methylbutanoate = 3-methyl-2-oxobutanoate + H2O. It catalyses the reaction (2R,3R)-2,3-dihydroxy-3-methylpentanoate = (S)-3-methyl-2-oxopentanoate + H2O. It functions in the pathway amino-acid biosynthesis; L-isoleucine biosynthesis; L-isoleucine from 2-oxobutanoate: step 3/4. Its pathway is amino-acid biosynthesis; L-valine biosynthesis; L-valine from pyruvate: step 3/4. Its function is as follows. Functions in the biosynthesis of branched-chain amino acids. Catalyzes the dehydration of (2R,3R)-2,3-dihydroxy-3-methylpentanoate (2,3-dihydroxy-3-methylvalerate) into 2-oxo-3-methylpentanoate (2-oxo-3-methylvalerate) and of (2R)-2,3-dihydroxy-3-methylbutanoate (2,3-dihydroxyisovalerate) into 2-oxo-3-methylbutanoate (2-oxoisovalerate), the penultimate precursor to L-isoleucine and L-valine, respectively. The sequence is that of Dihydroxy-acid dehydratase from Methanosarcina barkeri (strain Fusaro / DSM 804).